The chain runs to 341 residues: tRNA N6-adenosine threonylcarbamoyltransferase (341 aa).

Residues His-111 and His-115 each coordinate Fe cation. Substrate contacts are provided by residues 133–137, Asp-166, Gly-179, Asp-183, and Asn-273; that span reads AVSGG. Residue Asp-301 coordinates Fe cation.

This sequence belongs to the KAE1 / TsaD family. Fe(2+) is required as a cofactor.

The protein resides in the cytoplasm. It carries out the reaction L-threonylcarbamoyladenylate + adenosine(37) in tRNA = N(6)-L-threonylcarbamoyladenosine(37) in tRNA + AMP + H(+). Required for the formation of a threonylcarbamoyl group on adenosine at position 37 (t(6)A37) in tRNAs that read codons beginning with adenine. Is involved in the transfer of the threonylcarbamoyl moiety of threonylcarbamoyl-AMP (TC-AMP) to the N6 group of A37, together with TsaE and TsaB. TsaD likely plays a direct catalytic role in this reaction. In Geobacter metallireducens (strain ATCC 53774 / DSM 7210 / GS-15), this protein is tRNA N6-adenosine threonylcarbamoyltransferase.